Here is a 270-residue protein sequence, read N- to C-terminus: Probable septum site-determining protein MinC (270 aa).

Residues 105–129 (DRRAPSSKAADEAPVQQAEPAAPAA) form a disordered region. The span at 116–129 (EAPVQQAEPAAPAA) shows a compositional bias: low complexity.

Belongs to the MinC family. In terms of assembly, interacts with MinD and FtsZ.

Functionally, cell division inhibitor that blocks the formation of polar Z ring septums. Rapidly oscillates between the poles of the cell to destabilize FtsZ filaments that have formed before they mature into polar Z rings. Prevents FtsZ polymerization. In Burkholderia mallei (strain NCTC 10247), this protein is Probable septum site-determining protein MinC.